The primary structure comprises 870 residues: Leucine--tRNA ligase (870 aa).

Residues 43–53 (PYPSGRLHMGH) carry the 'HIGH' region motif. The 'KMSKS' region signature appears at 626–630 (KMSKS). Position 629 (lysine 629) interacts with ATP.

Belongs to the class-I aminoacyl-tRNA synthetase family.

It localises to the cytoplasm. The catalysed reaction is tRNA(Leu) + L-leucine + ATP = L-leucyl-tRNA(Leu) + AMP + diphosphate. The polypeptide is Leucine--tRNA ligase (Pseudoalteromonas atlantica (strain T6c / ATCC BAA-1087)).